A 210-amino-acid chain; its full sequence is Putative cutinase (210 aa).

The span at 26–38 shows a compositional bias: basic and acidic residues; it reads DSERLPLKRDEPG. Positions 26 to 58 are disordered; that stretch reads DSERLPLKRDEPGSRSMRSTFIPSSQCSNLSSA. The segment covering 49–58 has biased composition (low complexity); the sequence is SSQCSNLSSA.

It carries out the reaction cutin + H2O = cutin monomers.. In Phytophthora capsici, this protein is Putative cutinase.